The chain runs to 239 residues: Dihydromethanopterin reductase (acceptor) (239 aa).

2 4Fe-4S ferredoxin-type domains span residues 144-175 and 176-205; these read MPYNIDRKQCKHCETCPPRENCPHEAISEKNG and VTDQIDLLKCKGCGICKELCPYNAIKGGPV. [4Fe-4S] cluster-binding residues include Cys-153, Cys-156, Cys-159, Cys-165, Cys-185, Cys-188, Cys-191, and Cys-195.

As to quaternary structure, homodimer. Requires [4Fe-4S] cluster as cofactor.

It carries out the reaction 5,6,7,8-tetrahydromethanopterin + A = 7,8-dihydromethanopterin + AH2. It participates in cofactor biosynthesis; 5,6,7,8-tetrahydromethanopterin biosynthesis. Functionally, involved in the biosynthesis of tetrahydromethanopterin, a coenzyme used in methanogenesis. Catalyzes the reduction of dihydromethanopterin (H(2)MPT) to tetrahydromethanopterin (H(4)MPT). Ferredoxin may serve as an electron donor. This Methanosarcina mazei (strain ATCC BAA-159 / DSM 3647 / Goe1 / Go1 / JCM 11833 / OCM 88) (Methanosarcina frisia) protein is Dihydromethanopterin reductase (acceptor).